The following is a 905-amino-acid chain: Transcription termination factor 1 (905 aa).

Composition is skewed to basic and acidic residues over residues 1–16 (MEGESSRFEIHTPVSD) and 24–33 (IHKERPQKHS). Residues 1–33 (MEGESSRFEIHTPVSDKKKKKCSIHKERPQKHS) form a disordered region. The N-terminal region (NRD) stretch occupies residues 1–223 (MEGESSRFEI…AHKNKSKKKK (223 aa)). At Ser65 the chain carries Phosphoserine. The segment at 151–443 (SHAHKSEALH…KSRPRQKKTQ (293 aa)) is disordered. Basic residues-rich tracts occupy residues 163–174 (VREKKNKKHQRK) and 215–226 (HKNKSKKKKKKS). Ser240 bears the Phosphoserine mark. Thr248 carries the post-translational modification Phosphothreonine. Composition is skewed to basic residues over residues 270 to 283 (THKKKSKKKKKKKS), 330 to 339 (NKSKKKKKKS), and 385 to 401 (TKKKSKKRKLTSVKRAR). Phosphoserine is present on Ser403. Residues 410-419 (PSKNSESTLF) show a composition bias toward polar residues. Tyr476 is subject to Phosphotyrosine. 3 positions are modified to phosphoserine: Ser478, Ser481, and Ser487. A may be involved in interaction with ARF region spans residues 498-886 (LQEFIPNIKD…IEKESEGQAP (389 aa)). Myb-like domains follow at residues 612–661 (DVNN…SQIS) and 661–745 (SSQR…TEIL). Residue Lys700 forms a Glycyl lysine isopeptide (Lys-Gly) (interchain with G-Cter in SUMO2) linkage. At Ser872 the chain carries Phosphoserine.

Oligomer. The oligomeric structure enables to interact simultaneously with two separate DNA fragments. Interacts with BAZ2A/TIP5. Interacts with CAVIN1. Interacts (via the N-terminal region (NRD) and a C-terminal region) with CDKN2A/ARF; the interaction is direct. Interacts (via C-terminal region) with NPM1/B23.

It is found in the nucleus. The protein resides in the nucleolus. The protein localises to the nucleoplasm. Functionally, multifunctional nucleolar protein that terminates ribosomal gene transcription, mediates replication fork arrest and regulates RNA polymerase I transcription on chromatin. Plays a dual role in rDNA regulation, being involved in both activation and silencing of rDNA transcription. Interaction with BAZ2A/TIP5 recovers DNA-binding activity. The protein is Transcription termination factor 1 (TTF1) of Homo sapiens (Human).